A 158-amino-acid chain; its full sequence is Transcription elongation factor GreA (158 aa).

This sequence belongs to the GreA/GreB family.

Functionally, necessary for efficient RNA polymerase transcription elongation past template-encoded arresting sites. The arresting sites in DNA have the property of trapping a certain fraction of elongating RNA polymerases that pass through, resulting in locked ternary complexes. Cleavage of the nascent transcript by cleavage factors such as GreA or GreB allows the resumption of elongation from the new 3'terminus. GreA releases sequences of 2 to 3 nucleotides. This is Transcription elongation factor GreA from Bacillus licheniformis (strain ATCC 14580 / DSM 13 / JCM 2505 / CCUG 7422 / NBRC 12200 / NCIMB 9375 / NCTC 10341 / NRRL NRS-1264 / Gibson 46).